The chain runs to 704 residues: Boron transporter 1 (704 aa).

The Cytoplasmic segment spans residues 1-35 (MEETFVPFEGIKNDLKGRLMCYKQDWTGGFKAGFR). A helical transmembrane segment spans residues 36 to 56 (ILAPTTYIFFASAIPVISFGE). The Extracellular segment spans residues 57–75 (QLERSTDGVLTAVQTLAST). A helical membrane pass occupies residues 76-96 (AICGMIHSIIGGQPLLILGVA). The Cytoplasmic segment spans residues 97 to 120 (EPTVIMYTFMFNFAKARPELGRDL). A helical transmembrane segment spans residues 121–141 (FLAWSGWVCVWTALMLFVLAI). The Extracellular segment spans residues 142-155 (CGACSIINRFTRVA). The helical transmembrane segment at 156–176 (GELFGLLIAMLFMQQAIKGLV) threads the bilayer. Residues 177–195 (DEFRIPERENQKLKEFLPS) lie on the Cytoplasmic side of the membrane. Residues 196 to 216 (WRFANGMFALVLSFGLLLTGL) traverse the membrane as a helical segment. Topologically, residues 217–233 (RSRKARSWRYGTGWLRS) are extracellular. The chain crosses the membrane as a helical span at residues 234 to 254 (LIADYGVPLMVLVWTGVSYIP). Residues 255 to 289 (AGDVPKGIPRRLFSPNPWSPGAYGNWTVVKEMLDV) lie on the Cytoplasmic side of the membrane. The helical transmembrane segment at 290 to 310 (PIVYIIGAFIPASMIAVLYYF) threads the bilayer. Over 311-337 (DHSVASQLAQQKEFNLRKPSSYHYDLL) the chain is Extracellular. The helical transmembrane segment at 338 to 358 (LLGFLTLMCGLLGVPPSNGVI) threads the bilayer. Residues 359-480 (PQSPMHTKSL…STMVGGCVAA (122 aa)) are Cytoplasmic-facing. Residues 481 to 501 (MPILKMIPTSVLWGYFAFMAI) traverse the membrane as a helical segment. Topologically, residues 502–557 (ESLPGNQFWERILLLFTAPSRRFKVLEDYHATFVETVPFKTIAMFTLFQTTYLLIC) are extracellular. Residues 558 to 578 (FGLTWIPIAGVMFPLMIMFLI) form a helical membrane-spanning segment. The Cytoplasmic segment spans residues 579 to 704 (PVRQYLLPRF…RSPLNQSSSN (126 aa)). Positions 641 to 704 (EFRHTSSPKV…RSPLNQSSSN (64 aa)) are disordered. The segment covering 647-664 (SPKVTSSSSTPVNNRSLS) has biased composition (low complexity).

It belongs to the anion exchanger (TC 2.A.31.3) family. In terms of tissue distribution, expressed in proximal side of various root cells, notably in the columella, lateral root cap, epidermis and endodermis in tip and elongation zones of the root. Also detected in the epidermis, cortex, endodermis, and stele cells of the root hair zone. Observed in cotyledons and hypocotyls.

It is found in the cell membrane. Its subcellular location is the endosome membrane. It localises to the vacuole membrane. Its function is as follows. Efflux-type boron (B) transporter for xylem loading, responsive of boron translocation from roots to shoots under boron limitation. Boron is essential for maintaining the integrity of plants cell walls. This is Boron transporter 1 from Arabidopsis thaliana (Mouse-ear cress).